The following is an 85-amino-acid chain: Large ribosomal subunit protein bL27 (85 aa).

Residues 1-21 are disordered; that stretch reads MAHKKGQGSTQNNRDSAGRRL.

This sequence belongs to the bacterial ribosomal protein bL27 family.

The polypeptide is Large ribosomal subunit protein bL27 (Nitratiruptor sp. (strain SB155-2)).